Here is a 219-residue protein sequence, read N- to C-terminus: NADH-quinone oxidoreductase subunit C (219 aa).

This sequence belongs to the complex I 30 kDa subunit family. In terms of assembly, NDH-1 is composed of 14 different subunits. Subunits NuoB, C, D, E, F, and G constitute the peripheral sector of the complex.

Its subcellular location is the cell inner membrane. The enzyme catalyses a quinone + NADH + 5 H(+)(in) = a quinol + NAD(+) + 4 H(+)(out). Functionally, NDH-1 shuttles electrons from NADH, via FMN and iron-sulfur (Fe-S) centers, to quinones in the respiratory chain. The immediate electron acceptor for the enzyme in this species is believed to be ubiquinone. Couples the redox reaction to proton translocation (for every two electrons transferred, four hydrogen ions are translocated across the cytoplasmic membrane), and thus conserves the redox energy in a proton gradient. The sequence is that of NADH-quinone oxidoreductase subunit C from Methylorubrum extorquens (strain PA1) (Methylobacterium extorquens).